Consider the following 95-residue polypeptide: Integration host factor subunit beta (95 aa).

This sequence belongs to the bacterial histone-like protein family. Heterodimer of an alpha and a beta chain.

Its function is as follows. This protein is one of the two subunits of integration host factor, a specific DNA-binding protein that functions in genetic recombination as well as in transcriptional and translational control. The protein is Integration host factor subunit beta of Shewanella putrefaciens (strain CN-32 / ATCC BAA-453).